Here is a 675-residue protein sequence, read N- to C-terminus: Putative elongation factor TypA-like SVR3, chloroplastic (675 aa).

The N-terminal 58 residues, 1-58 (MELSLSTSSASPAVLRRQASPLLHKQQVLGVSFASALKPGGGALRFPSRRPLPRPITC), are a transit peptide targeting the chloroplast. A disordered region spans residues 43 to 76 (ALRFPSRRPLPRPITCSASPSTAEPASEVKKKQL). Residues 59–68 (SASPSTAEPA) are compositionally biased toward low complexity. Residues 80–275 (DNVRNIAIVA…AIIRCVPGPN (196 aa)) enclose the tr-type G domain.

This sequence belongs to the TRAFAC class translation factor GTPase superfamily. Classic translation factor GTPase family. BipA subfamily.

It is found in the plastid. It localises to the chloroplast. Its function is as follows. Putative chloroplastic elongation factor involved in response to chilling stress. Required for proper chloroplast rRNA processing and/or translation at low temperature. Involved in plastid protein homeostasis. The protein is Putative elongation factor TypA-like SVR3, chloroplastic (SVR3) of Arabidopsis thaliana (Mouse-ear cress).